Reading from the N-terminus, the 279-residue chain is uncharacterized protein (279 aa).

Residues 1–29 show a composition bias toward low complexity; the sequence is MSSRYTSSYTPSSRYGSGWDYSSSYSSSR. Disordered regions lie at residues 1 to 111 and 137 to 233; these read MSSR…APRE and LTLA…AEAL. Residues 30–44 are compositionally biased toward basic and acidic residues; the sequence is TSRDRDTGSYRDRDY. Over residues 45-59 the composition is skewed to low complexity; sequence SSTSYTSTRPRYSTY. Residues 142 to 153 are compositionally biased toward acidic residues; the sequence is EPEESEEEEDDE. Positions 170-186 are enriched in low complexity; it reads ESSPVSSPVKEVSSAAS. Positions 189-205 are enriched in polar residues; the sequence is ANDNGNETENRTPSPTV. Residues 221–233 are compositionally biased toward basic and acidic residues; sequence SDVKKEGGDAEAL.

This is an uncharacterized protein from Caenorhabditis elegans.